The primary structure comprises 545 residues: MATIPLFFSLILFLRLYHASRLEKRKEVEGEGIVAAEDLVSENDNPQGDDEVLPVHFIDQAAIVRTSIINYTFRYNEVLDAAKLHRGLLQLLKIPGWNKLGGRLRATKNGKLEIHVPRSFSKTRPEVKFSHVDCSDTEIESHGLASQLPRPTGSTPSIQEGCHAFRSFALPTDLPNNIEHYWKNDQPMLSLHITSFANGTLVGLTFPHSLTDAMGTSEFLKAWSNVVAGKSSFVKPLQGTQVDVLGDVGTNLDKKASQGEFFLEDQQTRGFSLLSFIARYMWDVKTRRSIRTKHIYLPAKYMSHLRQGVEEELKRQNGGVVPFVSDGDLITAWGARMVMSSSTWKNCSAVICNVFDLRGRLKGTFARGGTYLQNLILPATTVLSKEEAATATTAQIALGLRKAIVEQTDDVQSRRLMRIARRWFSSMGSMPLFAKWDSRVVACTNWTKAKFLDAADFGPNALIAGGAGNQKSSSTRKAARHTEPTQAQTQPGRPVMYWGTTLSVTDNPRDTFVIYGKDKVGNYWVHAYLREETWSLIQKELDSFR.

Positions 1–19 (MATIPLFFSLILFLRLYHA) are cleaved as a signal peptide. Asn-70 and Asn-198 each carry an N-linked (GlcNAc...) asparagine glycan. Residue His-208 is the Proton acceptor of the active site. Residues Asn-346 and Asn-445 are each glycosylated (N-linked (GlcNAc...) asparagine). Residues 466-493 (GAGNQKSSSTRKAARHTEPTQAQTQPGR) form a disordered region.

The protein belongs to the plant acyltransferase family.

Its pathway is secondary metabolite biosynthesis. Functionally, acetyltransferase; part of the gene cluster that mediates the biosynthesis of botrydial. Botrydial is necessary for colonization of plant tissue by the T4 strain. It is a strain-dependent virulence factor since highly aggressive strains like SAS56 or B05 still retain substantial virulence when botrydial synthesis is impaired, since they produce also botcinic acid. The first step of botrydial biosynthesis is performed by the sesquiterpene synthase BOT2 which catalyzes the cyclization of farnesyl diphosphate (FPP) to presilphiperfolan-8-beta-ol (PSP). The cytochrome P450 monooxygenase BOT4 then catalyzes the hydroxylation at C-4 to give a probotryane intermediate. Acetylation of the hydroxyl at C-4 is carried out by the acetyltransferase BOT5, followed by the combined action of the P450 monooxygenases BOT3 and BOT1, to yield finally the glycol, via the regio- and stereospecific hydroxylations at C-10 and C-15 of the probotryane intermediates, respectively. The cleavage of the C10-C15 bond of probotryane skeleton is an intriguing and chemically important reaction, which could be mediated by some of the monooxygenases or by a combination of them. It is possible that either BOT3 or BOT1 would oxidize either the 10- or the 15-hydroxy group to the hydroperoxide derivative, which would then undergo heterolytic fragmentation to give the dialdehyde botrydial. Finally, the dehydrogenase BOT7 might be involved in the conversion of botrydial to dihydrobotrydial. This chain is Acetyltransferase BOT5, found in Botryotinia fuckeliana (Noble rot fungus).